A 372-amino-acid chain; its full sequence is Maltose/maltodextrin import ATP-binding protein MalK (372 aa).

The ABC transporter domain occupies valine 4–isoleucine 234. Glycine 36–serine 43 serves as a coordination point for ATP.

Belongs to the ABC transporter superfamily. Maltooligosaccharide importer (TC 3.A.1.1.1) family. In terms of assembly, the complex is composed of two ATP-binding proteins (MalK), two transmembrane proteins (MalG and MalK) and a solute-binding protein (MalE).

Its subcellular location is the cell inner membrane. It carries out the reaction D-maltose(out) + ATP + H2O = D-maltose(in) + ADP + phosphate + H(+). Functionally, part of the ABC transporter complex MalEFGK involved in maltose/maltodextrin import. Responsible for energy coupling to the transport system. This chain is Maltose/maltodextrin import ATP-binding protein MalK, found in Mannheimia succiniciproducens (strain KCTC 0769BP / MBEL55E).